Reading from the N-terminus, the 145-residue chain is Large ribosomal subunit protein bL19 (145 aa).

Basic and acidic residues predominate over residues 112–130 (GKSARIKERRPAKAVEKTS). The interval 112 to 145 (GKSARIKERRPAKAVEKTSKPASAKKPAAKANKK) is disordered.

Belongs to the bacterial ribosomal protein bL19 family.

Its function is as follows. This protein is located at the 30S-50S ribosomal subunit interface and may play a role in the structure and function of the aminoacyl-tRNA binding site. The protein is Large ribosomal subunit protein bL19 of Malacoplasma penetrans (strain HF-2) (Mycoplasma penetrans).